Reading from the N-terminus, the 240-residue chain is 2,3,4,5-tetrahydropyridine-2,6-dicarboxylate N-acetyltransferase (240 aa).

It belongs to the transferase hexapeptide repeat family. DapH subfamily.

The catalysed reaction is (S)-2,3,4,5-tetrahydrodipicolinate + acetyl-CoA + H2O = L-2-acetamido-6-oxoheptanedioate + CoA. Its pathway is amino-acid biosynthesis; L-lysine biosynthesis via DAP pathway; LL-2,6-diaminopimelate from (S)-tetrahydrodipicolinate (acetylase route): step 1/3. Functionally, catalyzes the transfer of an acetyl group from acetyl-CoA to tetrahydrodipicolinate. In Shouchella clausii (strain KSM-K16) (Alkalihalobacillus clausii), this protein is 2,3,4,5-tetrahydropyridine-2,6-dicarboxylate N-acetyltransferase.